A 284-amino-acid chain; its full sequence is Acetyl-coenzyme A carboxylase carboxyl transferase subunit beta (284 aa).

Residues 25–284 form the CoA carboxyltransferase N-terminal domain; sequence LWTKCPKCES…ICRMLLQKSA (260 aa). Zn(2+)-binding residues include C29, C32, C48, and C51. The C4-type zinc-finger motif lies at 29 to 51; that stretch reads CPKCESTLYRAEVRRNLEVCPKC.

The protein belongs to the AccD/PCCB family. As to quaternary structure, acetyl-CoA carboxylase is a heterohexamer composed of biotin carboxyl carrier protein (AccB), biotin carboxylase (AccC) and two subunits each of ACCase subunit alpha (AccA) and ACCase subunit beta (AccD). Zn(2+) serves as cofactor.

The protein resides in the cytoplasm. It catalyses the reaction N(6)-carboxybiotinyl-L-lysyl-[protein] + acetyl-CoA = N(6)-biotinyl-L-lysyl-[protein] + malonyl-CoA. Its pathway is lipid metabolism; malonyl-CoA biosynthesis; malonyl-CoA from acetyl-CoA: step 1/1. Functionally, component of the acetyl coenzyme A carboxylase (ACC) complex. Biotin carboxylase (BC) catalyzes the carboxylation of biotin on its carrier protein (BCCP) and then the CO(2) group is transferred by the transcarboxylase to acetyl-CoA to form malonyl-CoA. The polypeptide is Acetyl-coenzyme A carboxylase carboxyl transferase subunit beta (Hydrogenovibrio crunogenus (strain DSM 25203 / XCL-2) (Thiomicrospira crunogena)).